Reading from the N-terminus, the 139-residue chain is Small ribosomal subunit protein uS11A (139 aa).

The segment at 119 to 139 (DVTPIPTDSTRRKGGRRGRRL) is disordered. The span at 130–139 (RKGGRRGRRL) shows a compositional bias: basic residues.

This sequence belongs to the universal ribosomal protein uS11 family. As to quaternary structure, component of the small ribosomal subunit (SSU). Mature yeast ribosomes consist of a small (40S) and a large (60S) subunit. The 40S small subunit contains 1 molecule of ribosomal RNA (18S rRNA) and at least 33 different proteins. The large 60S subunit contains 3 rRNA molecules (25S, 5.8S and 5S rRNA) and at least 46 different proteins. uS11 interacts with eS1 forming part of the mRNA exit tunnel. uS11 interacts with snoRNA U3. uS11 interacts with MPP10. Component of the ribosomal small subunit (SSU) processome composed of at least 40 protein subunits and snoRNA U3.

The protein localises to the cytoplasm. Its subcellular location is the nucleus. It localises to the nucleolus. Component of the ribosome, a large ribonucleoprotein complex responsible for the synthesis of proteins in the cell. The small ribosomal subunit (SSU) binds messenger RNAs (mRNAs) and translates the encoded message by selecting cognate aminoacyl-transfer RNA (tRNA) molecules. The large subunit (LSU) contains the ribosomal catalytic site termed the peptidyl transferase center (PTC), which catalyzes the formation of peptide bonds, thereby polymerizing the amino acids delivered by tRNAs into a polypeptide chain. The nascent polypeptides leave the ribosome through a tunnel in the LSU and interact with protein factors that function in enzymatic processing, targeting, and the membrane insertion of nascent chains at the exit of the ribosomal tunnel. uS11 is involved in nucleolar processing of pre-18S ribosomal RNA and ribosome assembly. This is Small ribosomal subunit protein uS11A (rps1401) from Schizosaccharomyces pombe (strain 972 / ATCC 24843) (Fission yeast).